The following is a 285-amino-acid chain: Xanthoxin dehydrogenase (285 aa).

At Ser-2 the chain carries N-acetylserine.

Belongs to the short-chain dehydrogenases/reductases (SDR) family. In terms of tissue distribution, predominantly in roots and stems, and at lower levels in leaves and seeds.

The protein localises to the cytoplasm. The enzyme catalyses 2-cis,4-trans-xanthoxin + NAD(+) = 2-cis-(+)-abscisic aldehyde + NADH + H(+). It carries out the reaction 2-trans,4-trans-xanthoxin + NAD(+) = 2-trans-(+)-abscisic aldehyde + NADH + H(+). Its function is as follows. Involved in the biosynthesis of abscisic acid. Catalyzes the conversion of xanthoxin to abscisic aldehyde. In Arabidopsis thaliana (Mouse-ear cress), this protein is Xanthoxin dehydrogenase.